The sequence spans 347 residues: Transcription factor JunB (347 aa).

Residues Lys4, Lys33, and Lys36 each participate in a glycyl lysine isopeptide (Lys-Gly) (interchain with G-Cter in SUMO2) cross-link. The segment at 51-73 is disordered; that stretch reads KAPGARGPGPEGGGGGSYFSGQG. Residues 56-68 are compositionally biased toward gly residues; the sequence is RGPGPEGGGGGSY. A Glycyl lysine isopeptide (Lys-Gly) (interchain with G-Cter in SUMO2) cross-link involves residue Lys81. A phosphothreonine mark is found at Thr102 and Thr104. The residue at position 117 (Ser117) is a Phosphoserine. Residue Lys141 forms a Glycyl lysine isopeptide (Lys-Gly) (interchain with G-Cter in SUMO2) linkage. Residues 239-253 show a composition bias toward basic and acidic residues; the sequence is FKEEPQTVPEARSRD. The interval 239 to 260 is disordered; the sequence is FKEEPQTVPEARSRDATPPVSP. At Lys240 the chain carries N6-acetyllysine; alternate. Lys240 is covalently cross-linked (Glycyl lysine isopeptide (Lys-Gly) (interchain with G-Cter in SUMO1); alternate). A Glycyl lysine isopeptide (Lys-Gly) (interchain with G-Cter in SUMO2); alternate cross-link involves residue Lys240. Ser251 is modified (phosphoserine). Phosphothreonine is present on Thr255. Ser259 is subject to Phosphoserine. Residues 268–295 are basic motif; sequence RIKVERKRLRNRLAATKCRKRKLERIAR. Residues 268 to 331 form the bZIP domain; the sequence is RIKVERKRLR…AQLKQKVMTH (64 aa). Residues 296-324 form a leucine-zipper region; sequence LEDKVKTLKAENAGLSSTAGLLREQVAQL. A Glycyl lysine isopeptide (Lys-Gly) (interchain with G-Cter in SUMO2) cross-link involves residue Lys343.

This sequence belongs to the bZIP family. Jun subfamily. As to quaternary structure, binds DNA as a homodimer or as a heterodimer with another member of the Jun/Fos family. Component of an AP-1 transcription factor complex composed of JUN-FOS heterodimers composed of JUN-FOS heterodimers. As part of the AP-1 transcription factor complex, forms heterodimers with FOSB, thereby binding to the AP-1 consensus sequence and stimulating transcription. Interacts with ITCH (via its WW domains). Post-translationally, ubiquitinated by ITCH, leading to its degradation.

It localises to the nucleus. In terms of biological role, transcription factor involved in regulating gene activity following the primary growth factor response. Binds to the DNA sequence 5'-TGA[GC]TCA-3'. Heterodimerizes with proteins of the FOS family to form an AP-1 transcription complex, thereby enhancing its DNA binding activity to an AP-1 consensus sequence and its transcriptional activity. This chain is Transcription factor JunB (JUNB), found in Homo sapiens (Human).